We begin with the raw amino-acid sequence, 39 residues long: Large ribosomal subunit protein bL12 (39 aa).

It belongs to the bacterial ribosomal protein bL12 family. As to quaternary structure, homodimer. Part of the ribosomal stalk of the 50S ribosomal subunit. Forms a multimeric L10(L12)X complex, where L10 forms an elongated spine to which 2 to 4 L12 dimers bind in a sequential fashion. Binds GTP-bound translation factors.

Its function is as follows. Forms part of the ribosomal stalk which helps the ribosome interact with GTP-bound translation factors. Is thus essential for accurate translation. This Arthrobacter glacialis protein is Large ribosomal subunit protein bL12 (rplL).